The sequence spans 216 residues: MKGSPLFHGLAPEEVDLALSYFQRRLYPQGKPIFYQGDLGQALYLVASGKVRLFRTHLGGQERTLALLGPGELFGEMSLLDEGERSASAVAVEDTELLALFREDYLALIRRLPLVAHNLAALLARRLREADLELDLLSFEEARNRVAYALLKLLRQGLGPLFQIRHHELAALAGTSRETVSRVLHALAEEGVVRLGPGTVEVREAALLEEIAFGLA.

6–126 (LFHGLAPEEV…HNLAALLARR (121 aa)) is a binding site for a nucleoside 3',5'-cyclic phosphate. 3',5'-cyclic AMP contacts are provided by residues 75-78 (GEMS) and 85-86 (RS). One can recognise an HTH crp-type domain in the interval 140 to 206 (EEARNRVAYA…PGTVEVREAA (67 aa)). The H-T-H motif DNA-binding region spans 166–185 (HHELAALAGTSRETVSRVLH).

In terms of assembly, homodimer.

Activates transcription. Positively regulates six promoters upstream of the TTHB186, TTHB147, TTHB178, TTHB159, TTHA0771 and TTHA0176 genes in a cAMP-dependent manner. Regulated genes include clustered regularly interspaced short palindromic repeat (CRISPR) associated (Cas) genes, and the genes encoding a putative transcriptional regulator, a protein containing the exonuclease III-like domain of DNA polymerase, a GCN5-related acetyltransferase homolog, and some T.thermophilus-specific proteins of unknown function. The consensus DNA-binding site of this transcriptional regulator is 5'-(CT)NNG(G/T)(G/T)C(A/C)N(A/T)NNTCACAN(G/C)(G/C)-3' in which N is G, A, T or C. In Thermus thermophilus (strain ATCC 27634 / DSM 579 / HB8), this protein is Cyclic AMP receptor protein.